Consider the following 364-residue polypeptide: Lipoyl synthase, chloroplastic (364 aa).

The transit peptide at Met-1–Arg-70 directs the protein to the chloroplast. A compositionally biased stretch (low complexity) spans Ser-32–Thr-52. The interval Ser-32–Lys-64 is disordered. Residues Cys-95, Cys-100, Cys-106, Cys-126, Cys-130, Cys-133, and Ser-341 each coordinate [4Fe-4S] cluster. The region spanning Gly-109–Arg-330 is the Radical SAM core domain.

Belongs to the radical SAM superfamily. Lipoyl synthase family. Requires [4Fe-4S] cluster as cofactor.

The protein resides in the plastid. The protein localises to the chloroplast. It carries out the reaction [[Fe-S] cluster scaffold protein carrying a second [4Fe-4S](2+) cluster] + N(6)-octanoyl-L-lysyl-[protein] + 2 oxidized [2Fe-2S]-[ferredoxin] + 2 S-adenosyl-L-methionine + 4 H(+) = [[Fe-S] cluster scaffold protein] + N(6)-[(R)-dihydrolipoyl]-L-lysyl-[protein] + 4 Fe(3+) + 2 hydrogen sulfide + 2 5'-deoxyadenosine + 2 L-methionine + 2 reduced [2Fe-2S]-[ferredoxin]. It functions in the pathway protein modification; protein lipoylation via endogenous pathway; protein N(6)-(lipoyl)lysine from octanoyl-[acyl-carrier-protein]: step 2/2. Its function is as follows. Catalyzes the radical-mediated insertion of two sulfur atoms into the C-6 and C-8 positions of the octanoyl moiety bound to the lipoyl domains of lipoate-dependent enzymes, thereby converting the octanoylated domains into lipoylated derivatives. The polypeptide is Lipoyl synthase, chloroplastic (Ricinus communis (Castor bean)).